Here is a 208-residue protein sequence, read N- to C-terminus: UPF0323 lipoprotein HH_0014 (208 aa).

The N-terminal stretch at Met1–Ala26 is a signal peptide. Residue Cys27 is the site of N-palmitoyl cysteine attachment. Residue Cys27 is the site of S-diacylglycerol cysteine attachment. A disordered region spans residues Ala148–Ser208. Composition is skewed to low complexity over residues Ser169–Ser185 and Ser193–Ser208.

The protein belongs to the UPF0323 family.

It localises to the cell membrane. The chain is UPF0323 lipoprotein HH_0014 from Helicobacter hepaticus (strain ATCC 51449 / 3B1).